The chain runs to 251 residues: Putative deaminase AgaI (251 aa).

The Proton acceptor; for enolization step role is filled by Asp-86. Catalysis depends on Asn-154, which acts as the For ring-opening step. Residue His-156 is the Proton acceptor; for ring-opening step of the active site. Glu-161 functions as the For ring-opening step in the catalytic mechanism.

The protein belongs to the glucosamine/galactosamine-6-phosphate isomerase family.

This chain is Putative deaminase AgaI (agaI), found in Escherichia coli (strain K12).